Reading from the N-terminus, the 136-residue chain is Putative pre-16S rRNA nuclease (136 aa).

This sequence belongs to the YqgF nuclease family.

It is found in the cytoplasm. Functionally, could be a nuclease involved in processing of the 5'-end of pre-16S rRNA. The polypeptide is Putative pre-16S rRNA nuclease (Francisella tularensis subsp. mediasiatica (strain FSC147)).